Consider the following 1071-residue polypeptide: MPKRVDINKILVIGSGPIIIGQAAEFDYAGTQACLALKEEGYEVILVNSNPATIMTDTEMADRVYIEPLTPEFLTRIIRKERPDAILPTLGGQTGLNLAVELSERGVLAECGVEVLGTKLSAIQQAEDRDLFRTLMNELNEPVPESEIIHSLEEAEKFVSQIGFPVIVRPAYTLGGTGGGICSNETELKEIVENGLKLSPVHQCLLEKSIAGYKEIEYEVMRDSQDHAIVVCNMENIDPVGIHTGDSIVVAPSQTLSDREYQLLRNVSLKLIRALGIEGGCNVQLALDPDSFQYYIIEVNPRVSRSSALASKATGYPIAKLAAKIAVGLSLDEMMNPVTGKTYAAFEPALDYVVSKIPRWPFDKFESANRKLGTQMKATGEVMAIGRTLEESLLKAVRSLEADVYHLELKDAADISDELLEKRIKKAGDERLFYLAEAYRRGYTVEDLHEFSAIDVFFLHKLFGIVQFEKELKANAGDTDVLRRAKELGFSDQYISREWKMKESELYSLRKQAGIAPVFKMVDTCAAEFESETPYFYSTYEEENESVVTDKKSVMVLGSGPIRIGQGVEFDYATVHSVWAIKQAGYEAIIVNNNPETVSTDFSISDKLYFEPLTIEDVMHIIDLEQPMGVVVQFGGQTAINLADELSARGVKILGTSLEDLDRAEDRDKFEQALGELGVPQPLGKTATSVNQAVSIASDIGYPVLVRPSYVLGGRAMEIVYHEEELLHYMKNAVKINPQHPVLIDRYLTGKEIEVDAVSDGETVVIPGIMEHIERAGVHSGDSIAVYPPQSLTEDIKKKIEQYTIALAKGLNIVGLLNIQFVLSQGEVYVLEVNPRSSRTVPFLSKITGIPMANLATKIILGQKLAAFGYTEGLQPEQQGVFVKAPVFSFAKLRRVDITLGPEMKSTGEVMGKDSTLEKALYKALIASGIQIPNYGSVLLTVADKDKEEGLAIAKRFHAIGYNILATEGTAGYLKEASIPAKVVGKIGQDGPNLLDVIRNGEAQFVINTLTKGKQPARDGFRIRRESVENGVACLTSLDTAEAILRVLESMTFRADQMPAVNTNQEAAVTI.

The segment at 1-401 (MPKRVDINKI…SLLKAVRSLE (401 aa)) is carboxyphosphate synthetic domain. The ATP site is built by arginine 129, arginine 169, glycine 175, glycine 176, lysine 208, isoleucine 210, glutamate 215, glycine 241, isoleucine 242, histidine 243, glutamine 284, and glutamate 298. Residues 133-327 (RTLMNELNEP…IAKLAAKIAV (195 aa)) form the ATP-grasp 1 domain. The Mg(2+) site is built by glutamine 284, glutamate 298, and asparagine 300. Positions 284, 298, and 300 each coordinate Mn(2+). An oligomerization domain region spans residues 402–546 (ADVYHLELKD…YSTYEEENES (145 aa)). Residues 547-929 (VVTDKKSVMV…ALYKALIASG (383 aa)) are carbamoyl phosphate synthetic domain. Residues 671 to 861 (EQALGELGVP…MANLATKIIL (191 aa)) enclose the ATP-grasp 2 domain. 10 residues coordinate ATP: arginine 707, arginine 746, leucine 748, glutamate 752, glycine 777, valine 778, histidine 779, serine 780, glutamine 820, and glutamate 832. Mg(2+) contacts are provided by glutamine 820, glutamate 832, and asparagine 834. Residues glutamine 820, glutamate 832, and asparagine 834 each contribute to the Mn(2+) site. Residues 930-1071 (IQIPNYGSVL…NTNQEAAVTI (142 aa)) enclose the MGS-like domain. Positions 930-1071 (IQIPNYGSVL…NTNQEAAVTI (142 aa)) are allosteric domain.

It belongs to the CarB family. In terms of assembly, composed of two chains; the small (or glutamine) chain promotes the hydrolysis of glutamine to ammonia, which is used by the large (or ammonia) chain to synthesize carbamoyl phosphate. Tetramer of heterodimers (alpha,beta)4. Interacts with BrxC. The cofactor is Mg(2+). Mn(2+) serves as cofactor.

The catalysed reaction is hydrogencarbonate + L-glutamine + 2 ATP + H2O = carbamoyl phosphate + L-glutamate + 2 ADP + phosphate + 2 H(+). It carries out the reaction hydrogencarbonate + NH4(+) + 2 ATP = carbamoyl phosphate + 2 ADP + phosphate + 2 H(+). It functions in the pathway amino-acid biosynthesis; L-arginine biosynthesis; carbamoyl phosphate from bicarbonate: step 1/1. The protein operates within pyrimidine metabolism; UMP biosynthesis via de novo pathway; (S)-dihydroorotate from bicarbonate: step 1/3. Small subunit of the glutamine-dependent carbamoyl phosphate synthetase (CPSase). CPSase catalyzes the formation of carbamoyl phosphate from the ammonia moiety of glutamine, carbonate, and phosphate donated by ATP, constituting the first step of the biosynthetic pathway leading to pyrimidine nucleotides. The large subunit (synthetase) binds the substrates ammonia (free or transferred from glutamine from the small subunit), hydrogencarbonate and ATP and carries out an ATP-coupled ligase reaction, activating hydrogencarbonate by forming carboxy phosphate which reacts with ammonia to form carbamoyl phosphate. This chain is Carbamoyl phosphate synthase pyrimidine-specific large chain (pyrAB), found in Bacillus subtilis (strain 168).